Consider the following 430-residue polypeptide: UDP-N-acetylglucosamine 1-carboxyvinyltransferase (430 aa).

A phosphoenolpyruvate-binding site is contributed by 22–23 (KN). R102 is a binding site for UDP-N-acetyl-alpha-D-glucosamine. C126 functions as the Proton donor in the catalytic mechanism. C126 carries the 2-(S-cysteinyl)pyruvic acid O-phosphothioketal modification. UDP-N-acetyl-alpha-D-glucosamine-binding positions include 131 to 135 (RPVDL), 172 to 175 (KVSV), D317, and I339.

Belongs to the EPSP synthase family. MurA subfamily.

The protein localises to the cytoplasm. It catalyses the reaction phosphoenolpyruvate + UDP-N-acetyl-alpha-D-glucosamine = UDP-N-acetyl-3-O-(1-carboxyvinyl)-alpha-D-glucosamine + phosphate. It participates in cell wall biogenesis; peptidoglycan biosynthesis. In terms of biological role, cell wall formation. Adds enolpyruvyl to UDP-N-acetylglucosamine. This is UDP-N-acetylglucosamine 1-carboxyvinyltransferase from Rhizobium meliloti (strain 1021) (Ensifer meliloti).